A 542-amino-acid polypeptide reads, in one-letter code: Calcium/calmodulin-dependent protein kinase type II subunit beta (542 aa).

The 259-residue stretch at 14-272 (YQLYEDIGKG…AHEALKHPWV (259 aa)) folds into the Protein kinase domain. Tyr17 carries the post-translational modification Phosphotyrosine. Residues 20–28 (IGKGAFSVV) and Lys43 each bind ATP. The Proton acceptor role is filled by Asp136. The segment at 283–292 (HRQETVECLK) is autoinhibitory domain. The residue at position 287 (Thr287) is a Phosphothreonine; by autocatalysis. Residues 291–301 (LKKFNARRKLK) are calmodulin-binding. Thr306 and Thr307 each carry phosphothreonine; by autocatalysis. Residues 349 to 407 (ADGVKPQTNSTKNSAAATSPKGTLPPAALEPQTTVIHNPVDGIKESSDSTHTTIEDEDT) are disordered. The span at 354-369 (PQTNSTKNSAAATSPK) shows a compositional bias: polar residues. Ser367, Ser394, and Ser397 each carry phosphoserine. A phosphothreonine mark is found at Thr400 and Thr401.

It belongs to the protein kinase superfamily. CAMK Ser/Thr protein kinase family. CaMK subfamily. In terms of assembly, CAMK2 is composed of 4 different chains: alpha (CAMK2A), beta (CAMK2B), gamma (CAMK2G), and delta (CAMK2D). The different isoforms assemble into homo- or heteromultimeric holoenzymes composed of 12 subunits with two hexameric rings stacked one on top of the other. Interacts with SYNGAP1, CAMK2N2 and MPDZ. Interacts with FOXO3. Interacts (when in a kinase inactive state not associated with calmodulin) with ARC; leading to target ARC to inactive synapses. Interacts with CAMK2N1; this interaction requires CAMK2B activation by Ca(2+). Post-translationally, autophosphorylation of Thr-287 following activation by Ca(2+)/calmodulin. Phosphorylation of Thr-287 locks the kinase into an activated state.

It localises to the cytoplasm. The protein resides in the cytoskeleton. The protein localises to the microtubule organizing center. Its subcellular location is the centrosome. It is found in the sarcoplasmic reticulum membrane. It localises to the synapse. It carries out the reaction L-seryl-[protein] + ATP = O-phospho-L-seryl-[protein] + ADP + H(+). The catalysed reaction is L-threonyl-[protein] + ATP = O-phospho-L-threonyl-[protein] + ADP + H(+). With respect to regulation, activated by Ca(2+)/calmodulin. Binding of calmodulin results in conformational change that relieves intrasteric autoinhibition and allows autophosphorylation of Thr-287 which turns the kinase in a constitutively active form and confers to the kinase a Ca(2+)-independent activity. In terms of biological role, calcium/calmodulin-dependent protein kinase that functions autonomously after Ca(2+)/calmodulin-binding and autophosphorylation, and is involved in dendritic spine and synapse formation, neuronal plasticity and regulation of sarcoplasmic reticulum Ca(2+) transport in skeletal muscle. In neurons, plays an essential structural role in the reorganization of the actin cytoskeleton during plasticity by binding and bundling actin filaments in a kinase-independent manner. This structural function is required for correct targeting of CaMK2A, which acts downstream of NMDAR to promote dendritic spine and synapse formation and maintain synaptic plasticity which enables long-term potentiation (LTP) and hippocampus-dependent learning. In developing hippocampal neurons, promotes arborization of the dendritic tree and in mature neurons, promotes dendritic remodeling. Also regulates the migration of developing neurons. Participates in the modulation of skeletal muscle function in response to exercise. In slow-twitch muscles, is involved in regulation of sarcoplasmic reticulum (SR) Ca(2+) transport and in fast-twitch muscle participates in the control of Ca(2+) release from the SR through phosphorylation of triadin, a ryanodine receptor-coupling factor, and phospholamban (PLN/PLB), an endogenous inhibitor of SERCA2A/ATP2A2. In response to interferon-gamma (IFN-gamma) stimulation, catalyzes phosphorylation of STAT1, stimulating the JAK-STAT signaling pathway. Phosphorylates reticulophagy regulator RETREG1 at 'Ser-147' under endoplasmic reticulum stress conditions which enhances RETREG1 oligomerization and its membrane scission and reticulophagy activity. In Bos taurus (Bovine), this protein is Calcium/calmodulin-dependent protein kinase type II subunit beta (CAMK2B).